The following is a 206-amino-acid chain: Type III pantothenate kinase (206 aa).

Position 5–12 (5–12 (DIGNTFLH)) interacts with ATP. Residues Tyr69 and 73 to 76 (GVDR) each bind substrate. The active-site Proton acceptor is Asp75. Residue Asp90 participates in K(+) binding. Residue Ser93 participates in ATP binding. Thr145 contributes to the substrate binding site.

This sequence belongs to the type III pantothenate kinase family. Homodimer. Requires NH4(+) as cofactor. K(+) serves as cofactor.

It is found in the cytoplasm. The catalysed reaction is (R)-pantothenate + ATP = (R)-4'-phosphopantothenate + ADP + H(+). The protein operates within cofactor biosynthesis; coenzyme A biosynthesis; CoA from (R)-pantothenate: step 1/5. Catalyzes the phosphorylation of pantothenate (Pan), the first step in CoA biosynthesis. The chain is Type III pantothenate kinase from Helicobacter hepaticus (strain ATCC 51449 / 3B1).